Reading from the N-terminus, the 423-residue chain is Gamma-glutamyl phosphate reductase (423 aa).

This sequence belongs to the gamma-glutamyl phosphate reductase family.

The protein resides in the cytoplasm. The enzyme catalyses L-glutamate 5-semialdehyde + phosphate + NADP(+) = L-glutamyl 5-phosphate + NADPH + H(+). It participates in amino-acid biosynthesis; L-proline biosynthesis; L-glutamate 5-semialdehyde from L-glutamate: step 2/2. Its function is as follows. Catalyzes the NADPH-dependent reduction of L-glutamate 5-phosphate into L-glutamate 5-semialdehyde and phosphate. The product spontaneously undergoes cyclization to form 1-pyrroline-5-carboxylate. The polypeptide is Gamma-glutamyl phosphate reductase (Burkholderia ambifaria (strain ATCC BAA-244 / DSM 16087 / CCUG 44356 / LMG 19182 / AMMD) (Burkholderia cepacia (strain AMMD))).